Consider the following 395-residue polypeptide: Na(+)/H(+) antiporter NhaA (395 aa).

11 helical membrane passes run 11–31, 61–81, 96–116, 127–147, 156–176, 179–199, 202–222, 264–284, 295–315, 331–351, and 366–386; these read FAME…ALII, LLLW…GLEV, IVLP…IYWF, GWAI…ALLG, LFLM…IAIF, GTLS…LVAM, MGVV…VCVL, FGIL…GVTL, IAVG…WMAV, VLGV…VGSL, and MGIL…TAAA.

Belongs to the NhaA Na(+)/H(+) (TC 2.A.33) antiporter family.

The protein resides in the cell inner membrane. The enzyme catalyses Na(+)(in) + 2 H(+)(out) = Na(+)(out) + 2 H(+)(in). Functionally, na(+)/H(+) antiporter that extrudes sodium in exchange for external protons. The polypeptide is Na(+)/H(+) antiporter NhaA (Pseudomonas fluorescens (strain ATCC BAA-477 / NRRL B-23932 / Pf-5)).